A 128-amino-acid chain; its full sequence is Large ribosomal subunit protein bL17 (128 aa).

It belongs to the bacterial ribosomal protein bL17 family. Part of the 50S ribosomal subunit. Contacts protein L32.

In Pseudomonas fluorescens (strain ATCC BAA-477 / NRRL B-23932 / Pf-5), this protein is Large ribosomal subunit protein bL17.